The chain runs to 355 residues: Uroporphyrinogen decarboxylase (355 aa).

Substrate is bound by residues arginine 36–arginine 40, aspartate 85, tyrosine 160, serine 215, and histidine 334.

Belongs to the uroporphyrinogen decarboxylase family. Homodimer.

It localises to the cytoplasm. The enzyme catalyses uroporphyrinogen III + 4 H(+) = coproporphyrinogen III + 4 CO2. Its pathway is porphyrin-containing compound metabolism; protoporphyrin-IX biosynthesis; coproporphyrinogen-III from 5-aminolevulinate: step 4/4. Functionally, catalyzes the decarboxylation of four acetate groups of uroporphyrinogen-III to yield coproporphyrinogen-III. The protein is Uroporphyrinogen decarboxylase of Rhodococcus opacus (strain B4).